A 356-amino-acid polypeptide reads, in one-letter code: MSTVTITDLARENVRNLTPYQSARRLGGNGDVWLNANEYPTAVEFQLTQQTLNRYPECQPKVVIENYAQYAGVKPEQVLVSRGADEGIELLIRAFCEQGKDAILYCPPTYGMYSVSAETIGVECRTVPTLDNWQLDLQGISDKLDGVKVVYVCSPNNPTGQLINPQDFRTLLELTRGKAIVVADEAYIEFCPQASLAGWLAEYPHLAILRTLSKAFALAGLRCGFTLANEEVINLLMKVIAPYPLSTPVADIAAQALSPQGIVAMRERVAQIITEREYLIAALKEIPCVEQVFDSETNYILARFKASSAVFKSLWDQGIILRDQNKQPSLSGCLRITVGTREESQCVIDALRAEQV.

Lys214 bears the N6-(pyridoxal phosphate)lysine mark.

The protein belongs to the class-II pyridoxal-phosphate-dependent aminotransferase family. Histidinol-phosphate aminotransferase subfamily. In terms of assembly, homodimer. Pyridoxal 5'-phosphate serves as cofactor.

The catalysed reaction is L-histidinol phosphate + 2-oxoglutarate = 3-(imidazol-4-yl)-2-oxopropyl phosphate + L-glutamate. The protein operates within amino-acid biosynthesis; L-histidine biosynthesis; L-histidine from 5-phospho-alpha-D-ribose 1-diphosphate: step 7/9. In Escherichia coli O1:K1 / APEC, this protein is Histidinol-phosphate aminotransferase.